Reading from the N-terminus, the 563-residue chain is Phosphomethylpyrimidine synthase (563 aa).

Positions Pro95–Ser115 are disordered. Substrate-binding positions include Asn200, Met229, Tyr258, His294, Ser314–Gly316, Asp355–Arg358, and Glu394. His398 lines the Zn(2+) pocket. Tyr421 lines the substrate pocket. His462 is a binding site for Zn(2+). Residues Cys544, Cys547, and Cys552 each coordinate [4Fe-4S] cluster.

Belongs to the ThiC family. The cofactor is [4Fe-4S] cluster.

The enzyme catalyses 5-amino-1-(5-phospho-beta-D-ribosyl)imidazole + S-adenosyl-L-methionine = 4-amino-2-methyl-5-(phosphooxymethyl)pyrimidine + CO + 5'-deoxyadenosine + formate + L-methionine + 3 H(+). It functions in the pathway cofactor biosynthesis; thiamine diphosphate biosynthesis. In terms of biological role, catalyzes the synthesis of the hydroxymethylpyrimidine phosphate (HMP-P) moiety of thiamine from aminoimidazole ribotide (AIR) in a radical S-adenosyl-L-methionine (SAM)-dependent reaction. The sequence is that of Phosphomethylpyrimidine synthase from Chlorobium phaeobacteroides (strain BS1).